The following is a 173-amino-acid chain: Small ribosomal subunit protein uS5 (173 aa).

The S5 DRBM domain occupies 17–80 (WQERVIQIRR…ADGKKQLIDV (64 aa)).

The protein belongs to the universal ribosomal protein uS5 family. As to quaternary structure, part of the 30S ribosomal subunit. Contacts proteins S4 and S8.

In terms of biological role, with S4 and S12 plays an important role in translational accuracy. Located at the back of the 30S subunit body where it stabilizes the conformation of the head with respect to the body. The sequence is that of Small ribosomal subunit protein uS5 from Rippkaea orientalis (strain PCC 8801 / RF-1) (Cyanothece sp. (strain PCC 8801)).